The following is a 425-amino-acid chain: Serine--tRNA ligase (425 aa).

230-232 (TAE) is an L-serine binding site. 261 to 263 (RSE) is an ATP binding site. E284 contacts L-serine. ATP is bound at residue 348–351 (EISS). Position 384 (S384) interacts with L-serine.

This sequence belongs to the class-II aminoacyl-tRNA synthetase family. Type-1 seryl-tRNA synthetase subfamily. In terms of assembly, homodimer. The tRNA molecule binds across the dimer.

The protein resides in the cytoplasm. The catalysed reaction is tRNA(Ser) + L-serine + ATP = L-seryl-tRNA(Ser) + AMP + diphosphate + H(+). It catalyses the reaction tRNA(Sec) + L-serine + ATP = L-seryl-tRNA(Sec) + AMP + diphosphate + H(+). It functions in the pathway aminoacyl-tRNA biosynthesis; selenocysteinyl-tRNA(Sec) biosynthesis; L-seryl-tRNA(Sec) from L-serine and tRNA(Sec): step 1/1. Functionally, catalyzes the attachment of serine to tRNA(Ser). Is also able to aminoacylate tRNA(Sec) with serine, to form the misacylated tRNA L-seryl-tRNA(Sec), which will be further converted into selenocysteinyl-tRNA(Sec). The protein is Serine--tRNA ligase of Streptococcus pyogenes serotype M1.